We begin with the raw amino-acid sequence, 501 residues long: Dye-decolorizing peroxidase (501 aa).

The first 21 residues, 1 to 21 (MRLSPSFLSLALVIFVGEVVA), serve as a signal peptide directing secretion. Positions 22–60 (RNVVARASNPASVTGTRKVSLLKNVAGLPAVPTAQQVAV) are excised as a propeptide. D228 serves as the catalytic Proton acceptor. Residue N352 is glycosylated (N-linked (GlcNAc...) asparagine). H367 serves as a coordination point for heme. N403 carries N-linked (GlcNAc...) asparagine glycosylation.

The protein belongs to the DyP-type peroxidase family. Heme b is required as a cofactor.

It localises to the secreted. The catalysed reaction is Reactive Blue 5 + 2 H2O2 = 2,2'-disulfonyl azobenzene + 3-[(4-amino-6-chloro-1,3,5-triazin-2-yl)amino]benzenesulfonate + phthalate + 2 H2O + 2 H(+). It catalyses the reaction 2 a phenolic donor + H2O2 = 2 a phenolic radical donor + 2 H2O. Functionally, manganese-independent peroxidase that is able to convert a large number of compounds, but its physiological substrate is not known. In addition to classic peroxidase substrates (e.g. 2,6-dimethoxyphenol), oxidizes dyes such as Reactive Blue 5 and Reactive Black 5. This is Dye-decolorizing peroxidase from Exidia glandulosa (Black witch's butter).